A 365-amino-acid polypeptide reads, in one-letter code: Neutral protease 2 homolog mep20 (365 aa).

Positions 1-19 (MKVTILASAILALINGALA) are cleaved as a signal peptide. Residues 20–172 (LPANTPTLDV…PQAIKLLDRR (153 aa)) constitute a propeptide that is removed on maturation. Asn-73 is a glycosylation site (N-linked (GlcNAc...) asparagine). Intrachain disulfides connect Cys-178/Cys-249 and Cys-256/Cys-274. Residue His-299 coordinates Zn(2+). Glu-300 is an active-site residue. His-303 and Asp-314 together coordinate Zn(2+). Asn-351 carries N-linked (GlcNAc...) asparagine glycosylation.

It belongs to the peptidase M35 family. Zn(2+) serves as cofactor.

The protein resides in the secreted. The enzyme catalyses Preferential cleavage of bonds with hydrophobic residues in P1'. Also 3-Asn-|-Gln-4 and 8-Gly-|-Ser-9 bonds in insulin B chain.. Secreted metalloproteinase that allows assimilation of proteinaceous substrates. Shows high activities on basic nuclear substrates such as histone and protamine. May be involved in virulence. The chain is Neutral protease 2 homolog mep20 (mep20) from Aspergillus fumigatus (Neosartorya fumigata).